Here is a 470-residue protein sequence, read N- to C-terminus: Nuclear receptor subfamily 0 group B member 1 (470 aa).

Tandem repeats lie at residues methionine 1–cysteine 67, phenylalanine 68–cysteine 133, and phenylalanine 134–cysteine 200. The segment at methionine 1 to valine 253 is 4 X 67 AA tandem repeats. 3 consecutive short sequence motifs (LXXLL motif) follow at residues leucine 13–leucine 17, leucine 80–leucine 84, and leucine 146–leucine 150. Residues phenylalanine 201–valine 253 form a 4; truncated repeat. Positions aspartate 205–lysine 469 constitute an NR LBD domain. The short motif at methionine 461–leucine 466 is the AF-2 motif element.

Belongs to the nuclear hormone receptor family. NR0 subfamily. As to quaternary structure, homodimer. Interacts with NR5A1, NR5A2, NR0B2 and with COPS2. Interacts with ESRRB; represses ESRRB activity at the GATA6 promoter.

Its subcellular location is the nucleus. The protein localises to the cytoplasm. Its function is as follows. Nuclear receptor that lacks a DNA-binding domain and acts as a corepressor that inhibits the transcriptional activity of other nuclear receptors through heterodimeric interactions. Component of a cascade required for the development of the hypothalamic-pituitary-adrenal-gonadal axis. May also have a role in the development of the embryo and in the maintenance of embryonic stem cell pluripotency. This Macaca mulatta (Rhesus macaque) protein is Nuclear receptor subfamily 0 group B member 1 (NR0B1).